A 376-amino-acid polypeptide reads, in one-letter code: 26S proteasome non-ATPase regulatory subunit 13 (376 aa).

The PCI domain maps to 171 to 338; that stretch reads SYYKDALRFL…KRVHMTWVQP (168 aa).

In terms of assembly, component of the 19S proteasome regulatory particle complex. The 26S proteasome consists of a 20S core particle (CP) and two 19S regulatory subunits (RP). The regulatory particle is made of a lid composed of 9 subunits including PSMD13, a base containing 6 ATPases and few additional components.

Functionally, component of the 26S proteasome, a multiprotein complex involved in the ATP-dependent degradation of ubiquitinated proteins. This complex plays a key role in the maintenance of protein homeostasis by removing misfolded or damaged proteins, which could impair cellular functions, and by removing proteins whose functions are no longer required. Therefore, the proteasome participates in numerous cellular processes, including cell cycle progression, apoptosis, or DNA damage repair. The sequence is that of 26S proteasome non-ATPase regulatory subunit 13 from Gallus gallus (Chicken).